The primary structure comprises 394 residues: Argininosuccinate synthase (394 aa).

ATP contacts are provided by residues 7–15 and Ala34; that span reads AYSGGLDTS. L-citrulline contacts are provided by Tyr85 and Ser90. Gly115 is an ATP binding site. Residues Thr117, Asn121, and Asp122 each coordinate L-aspartate. Residue Asn121 participates in L-citrulline binding. L-citrulline contacts are provided by Arg125, Ser176, Ser185, Glu261, and Tyr273.

This sequence belongs to the argininosuccinate synthase family. Type 1 subfamily. In terms of assembly, homotetramer.

It is found in the cytoplasm. The enzyme catalyses L-citrulline + L-aspartate + ATP = 2-(N(omega)-L-arginino)succinate + AMP + diphosphate + H(+). Its pathway is amino-acid biosynthesis; L-arginine biosynthesis; L-arginine from L-ornithine and carbamoyl phosphate: step 2/3. This Ehrlichia ruminantium (strain Welgevonden) protein is Argininosuccinate synthase.